Consider the following 458-residue polypeptide: Divalent metal cation transporter MntH (458 aa).

11 helical membrane-spanning segments follow: residues 38–58 (GFWKTLMAFMGPGALVAVGYM), 86–106 (LIAMLLQAMAARLGIVTGMDL), 119–139 (GIFLWIVTELAIMATDIAEII), 151–171 (IPLLWGVLITAFDVLLLLLLM), 180–200 (AIVATLVAVILFVFLYEVILA), 223–243 (MLFLALGIVGATVMPHNLYLH), 275–295 (LTIAFVVNCLLLILGAAMFYG), 315–335 (IVGSIASPMLSLLFAVALLAS), 370–390 (GLSILPVIIFTVYYHGNEAQV), 395–415 (IYSQVFLSIALPVSMIPLTLF), and 436–456 (WFVTIVLTLLNIYLILQTVGL).

Belongs to the NRAMP family.

It is found in the cell membrane. Functionally, h(+)-stimulated, divalent metal cation uptake system. This Latilactobacillus sakei subsp. sakei (strain 23K) (Lactobacillus sakei subsp. sakei) protein is Divalent metal cation transporter MntH.